A 447-amino-acid polypeptide reads, in one-letter code: Phosphoglucosamine mutase (447 aa).

The Phosphoserine intermediate role is filled by Ser104. The Mg(2+) site is built by Ser104, Asp243, Asp245, and Asp247. Ser104 bears the Phosphoserine mark.

This sequence belongs to the phosphohexose mutase family. Mg(2+) serves as cofactor. Activated by phosphorylation.

It carries out the reaction alpha-D-glucosamine 1-phosphate = D-glucosamine 6-phosphate. In terms of biological role, catalyzes the conversion of glucosamine-6-phosphate to glucosamine-1-phosphate. The sequence is that of Phosphoglucosamine mutase from Corynebacterium efficiens (strain DSM 44549 / YS-314 / AJ 12310 / JCM 11189 / NBRC 100395).